A 380-amino-acid polypeptide reads, in one-letter code: Succinyl-diaminopimelate desuccinylase (380 aa).

H69 is a binding site for Zn(2+). D71 is an active-site residue. D102 is a Zn(2+) binding site. E135 acts as the Proton acceptor in catalysis. Residues E136, E164, and H353 each contribute to the Zn(2+) site.

The protein belongs to the peptidase M20A family. DapE subfamily. As to quaternary structure, homodimer. Requires Zn(2+) as cofactor. It depends on Co(2+) as a cofactor.

The enzyme catalyses N-succinyl-(2S,6S)-2,6-diaminopimelate + H2O = (2S,6S)-2,6-diaminopimelate + succinate. It functions in the pathway amino-acid biosynthesis; L-lysine biosynthesis via DAP pathway; LL-2,6-diaminopimelate from (S)-tetrahydrodipicolinate (succinylase route): step 3/3. Functionally, catalyzes the hydrolysis of N-succinyl-L,L-diaminopimelic acid (SDAP), forming succinate and LL-2,6-diaminopimelate (DAP), an intermediate involved in the bacterial biosynthesis of lysine and meso-diaminopimelic acid, an essential component of bacterial cell walls. The polypeptide is Succinyl-diaminopimelate desuccinylase (Cereibacter sphaeroides (strain KD131 / KCTC 12085) (Rhodobacter sphaeroides)).